The sequence spans 256 residues: Imidazole glycerol phosphate synthase subunit HisF (256 aa).

Active-site residues include aspartate 11 and aspartate 130.

This sequence belongs to the HisA/HisF family. Heterodimer of HisH and HisF.

Its subcellular location is the cytoplasm. The catalysed reaction is 5-[(5-phospho-1-deoxy-D-ribulos-1-ylimino)methylamino]-1-(5-phospho-beta-D-ribosyl)imidazole-4-carboxamide + L-glutamine = D-erythro-1-(imidazol-4-yl)glycerol 3-phosphate + 5-amino-1-(5-phospho-beta-D-ribosyl)imidazole-4-carboxamide + L-glutamate + H(+). The protein operates within amino-acid biosynthesis; L-histidine biosynthesis; L-histidine from 5-phospho-alpha-D-ribose 1-diphosphate: step 5/9. In terms of biological role, IGPS catalyzes the conversion of PRFAR and glutamine to IGP, AICAR and glutamate. The HisF subunit catalyzes the cyclization activity that produces IGP and AICAR from PRFAR using the ammonia provided by the HisH subunit. This chain is Imidazole glycerol phosphate synthase subunit HisF, found in Prochlorococcus marinus (strain MIT 9215).